Here is a 339-residue protein sequence, read N- to C-terminus: Glycerol-3-phosphate dehydrogenase [NAD(P)+] (339 aa).

3 residues coordinate NADPH: Ser11, Trp12, and Lys109. Residues Lys109, Gly140, and Ser142 each contribute to the sn-glycerol 3-phosphate site. An NADPH-binding site is contributed by Ala144. Residues Lys195, Asp249, Ser259, Arg260, and Asn261 each coordinate sn-glycerol 3-phosphate. Lys195 (proton acceptor) is an active-site residue. Arg260 is a binding site for NADPH. The NADPH site is built by Val284 and Glu286.

Belongs to the NAD-dependent glycerol-3-phosphate dehydrogenase family.

It is found in the cytoplasm. The catalysed reaction is sn-glycerol 3-phosphate + NAD(+) = dihydroxyacetone phosphate + NADH + H(+). The enzyme catalyses sn-glycerol 3-phosphate + NADP(+) = dihydroxyacetone phosphate + NADPH + H(+). It functions in the pathway membrane lipid metabolism; glycerophospholipid metabolism. Functionally, catalyzes the reduction of the glycolytic intermediate dihydroxyacetone phosphate (DHAP) to sn-glycerol 3-phosphate (G3P), the key precursor for phospholipid synthesis. The sequence is that of Glycerol-3-phosphate dehydrogenase [NAD(P)+] from Lactobacillus acidophilus (strain ATCC 700396 / NCK56 / N2 / NCFM).